Consider the following 275-residue polypeptide: Sororin-B (275 aa).

The span at 1 to 16 (MSERKKRGSSDADSRR) shows a compositional bias: basic and acidic residues. 2 disordered regions span residues 1-42 (MSER…PAPI) and 63-117 (NTGS…EIDV). Composition is skewed to polar residues over residues 63-76 (NTGSQFTPKVSNVT) and 93-112 (NAFSEQSQMDPKDVTSQSSA). Residues 91–93 (KEN) carry the KEN box motif. The FGF motif motif lies at 186-188 (FGF). Residues 253–275 (VDEWAAIMNAEFDEAEKFDLTVE) form a C-terminal Sororin domain region.

The protein belongs to the sororin family. In terms of assembly, interacts with the APC/C complex. Interacts with the chromatin-bound cohesin complex; the interaction is indirect, occurs after DNA replication and requires acetylation of the cohesin component smc3. Interacts (via the FGF motif) with pds5a and pds5b; the interaction is direct and prevents the interaction of pds5a with wapl. Ubiquitinated by the APC/C complex in G1, leading to its degradation.

The protein localises to the nucleus. It localises to the chromosome. The protein resides in the cytoplasm. Regulator of sister chromatid cohesion in mitosis stabilizing cohesin complex association with chromatin. May antagonize the action of wapl which stimulates cohesin dissociation from chromatin. Cohesion ensures that chromosome partitioning is accurate in both meiotic and mitotic cells and plays an important role in DNA repair. Required for efficient DNA double-stranded break repair. The chain is Sororin-B (cdca5-b) from Xenopus laevis (African clawed frog).